The sequence spans 434 residues: Nicotinate phosphoribosyltransferase (434 aa).

H242 is subject to Phosphohistidine; by autocatalysis.

It belongs to the NAPRTase family. Post-translationally, transiently phosphorylated on a His residue during the reaction cycle. Phosphorylation strongly increases the affinity for substrates and increases the rate of nicotinate D-ribonucleotide production. Dephosphorylation regenerates the low-affinity form of the enzyme, leading to product release.

It carries out the reaction nicotinate + 5-phospho-alpha-D-ribose 1-diphosphate + ATP + H2O = nicotinate beta-D-ribonucleotide + ADP + phosphate + diphosphate. The protein operates within cofactor biosynthesis; NAD(+) biosynthesis; nicotinate D-ribonucleotide from nicotinate: step 1/1. In terms of biological role, catalyzes the synthesis of beta-nicotinate D-ribonucleotide from nicotinate and 5-phospho-D-ribose 1-phosphate at the expense of ATP. The protein is Nicotinate phosphoribosyltransferase of Nitrobacter hamburgensis (strain DSM 10229 / NCIMB 13809 / X14).